We begin with the raw amino-acid sequence, 250 residues long: Imidazole glycerol phosphate synthase subunit HisF (250 aa).

Catalysis depends on residues Asp11 and Asp130.

It belongs to the HisA/HisF family. In terms of assembly, heterodimer of HisH and HisF.

The protein resides in the cytoplasm. The catalysed reaction is 5-[(5-phospho-1-deoxy-D-ribulos-1-ylimino)methylamino]-1-(5-phospho-beta-D-ribosyl)imidazole-4-carboxamide + L-glutamine = D-erythro-1-(imidazol-4-yl)glycerol 3-phosphate + 5-amino-1-(5-phospho-beta-D-ribosyl)imidazole-4-carboxamide + L-glutamate + H(+). Its pathway is amino-acid biosynthesis; L-histidine biosynthesis; L-histidine from 5-phospho-alpha-D-ribose 1-diphosphate: step 5/9. Its function is as follows. IGPS catalyzes the conversion of PRFAR and glutamine to IGP, AICAR and glutamate. The HisF subunit catalyzes the cyclization activity that produces IGP and AICAR from PRFAR using the ammonia provided by the HisH subunit. This chain is Imidazole glycerol phosphate synthase subunit HisF, found in Bacteroides fragilis (strain ATCC 25285 / DSM 2151 / CCUG 4856 / JCM 11019 / LMG 10263 / NCTC 9343 / Onslow / VPI 2553 / EN-2).